We begin with the raw amino-acid sequence, 375 residues long: Paralyzed arrest at two-fold protein 6 (375 aa).

The interval 1-51 (MSTLGRSKTPSRDEPKKPGVFEKLSGTLSRKKKAPEDEHGNQGGAHHATDE) is disordered. Over residues 10-20 (PSRDEPKKPGV) the composition is skewed to basic and acidic residues. 2 consecutive Calponin-homology (CH) domains span residues 99-206 (AQVV…LHYR) and 266-373 (AHVK…TKYK).

This sequence belongs to the parvin family. In terms of assembly, may interact (via calponin-homology (CH) 2 domain) with pat-4 (via kinase domain). May form a complex with unc-112 and pat-4. Component of an integrin containing attachment complex, composed of at least pat-2, pat-3, pat-4, pat-6, unc-52, unc-97 and unc-112. In terms of tissue distribution, expressed from 1.5 stage embryos, mostly within the muscle cells. In adult hermaphrodites, expressed in the attachments of other muscles, including the uterine, anal depressor, anal sphincter, and vulval muscles, as well as in the spermatheca and the distal tip cells. Expressed in mechanosensory receptor neurons ALML/R, PLML/R, AVM, and PVM. Localizes at body wall muscle attachments.

Its subcellular location is the cytoplasm. It localises to the cytoskeleton. The protein resides in the myofibril. It is found in the sarcomere. The protein localises to the m line. Its subcellular location is the perikaryon. It localises to the cell projection. The protein resides in the axon. Involved in the regulation of cell adhesion and cytoskeleton organization. Component of an integrin containing attachment complex, which is required for muscle development and maintenance. During embryonic development, required to recruit cpna-1, unc-89 and myofilaments to newly forming integrin attachments composed of integrins pat-2/pat-3, pat-4 and unc-112. Also required to reposition the integrin-based attachments so that they form the highly ordered array of dense body and M-line attachments that are characteristic of mature muscle cells. During the formation of neuromuscular junctions at the larval stage, negatively regulates membrane protrusion from body wall muscles. This chain is Paralyzed arrest at two-fold protein 6, found in Caenorhabditis elegans.